The chain runs to 1444 residues: MYAVYKQAHPPTGLEFSMYCNFFNNSERNLVVAGTSQLYVYRLNRDSEAPTKNDRSTDGKAHREHREKLELVASFSFFGNVMSMASVQLAGAKRDALLLSFKDAKLSVVEYDPGTHDLKTLSLHYFEEPELRDGFVQNVHTPRVRVDPDGRCAAMLIYGTRLVVLPFRRESLAEEHEGLVGEGQRSSFLPSYIIDVRALDEKLLNIVDLQFLHGYYEPTLLILFEPNQTWPGRVAVRQDTCSIVAISLNITQKVHPVIWSLTSLPFDCTQALAVPKPIGGVVIFAVNSLLYLNQSVPPYGVALNSLTTGTTAFPLRTQEGVRITLDCAQAAFISYDKMVISLKGGEIYVLTLITDGMRSVRAFHFDKAAASVLTTSMVTMEPGYLFLGSRLGNSLLLKYTEKLQEPPASTAREAADKEEPPSKKKRVDATTGWSGSKSVPQDEVDEIEVYGSEAQSGTQLATYSFEVCDSILNIGPCANAAMGEPAFLSEEFQNSPEPDLEIVVCSGYGKNGALSVLQKSIRPQVVTTFELPGCYDMWTVIAPVRKEQEETLKGEGTEPEPGAPEAEDDGRRHGFLILSREDSTMILQTGQEIMELDASGFATQGPTVFAGNIGDNRYIVQVSPLGIRLLEGVNQLHFIPVDLGSPIVQCAVADPYVVIMSAEGHVTMFLLKNDSYGGRHHRLALHKPPLHHQSKVITLCVYRDVSGMFTTESRLGGVRDELGGRGGPEAEGQGAETSPTVDDEEEMLYGDSGSLFSPSKEEARRSSQPPADRDPAPFRAEPTHWCLLVRENGAMEIYQLPDWRLVFLVKNFPVGQRVLVDSSFGQPTTQGEARKEEATRQGELPLVKEVLLVALGSRQRRPYLLVHVDQELLIYEAFPHDSQLGQGNLKVRFKKVPHNINFREKKPKPSKKKAEGGSTEEGTGPRGRVARFRYFEDIYGYSGVFICGPSPHWLLVTGRGALRLHPMGIDGPIDSFAPFHNINCPRGFLYFNRQGELRISVLPAYLSYDAPWPVRKIPLRCTAHYVAYHVESKVYAVATSTSTPCTRVPRMTGEEKEFETIERDERYVHPQQEAFCIQLISPVSWEAIPNARIELEEWEHVTCMKTVSLRSEETVSGLKGYVAAGTCLMQGEEVTCRGRILIMDVIEVVPEPGQPLTKNKFKVLYEKEQKGPVTALCHCNGHLVSAIGQKIFLWSLRASELTGMAFIDTQLYIHQMISVKNFILAADVMKSISLLRYQEESKTLSLVSRDAKPLEVYSVDFMVDNAQLGFLVSDRDRNLMVYMYLPEAKESFGGMRLLRRADFHVGAHVNTFWRTPCRGAAEGPSKKSVVWENKHITWFATLDGGIGLLLPMQEKTYRRLLMLQNALTTMLPHHAGLNPRAFRMLHVDRRVLQNAVRNVLDGELLNRYLYLSTMERGELAKKIGTTPDIILDDLLETDRVTAHF.

4 disordered regions span residues 406-439, 549-571, 716-778, and 902-924; these read PPASTAREAADKEEPPSKKKRVDATTGWSGSKSV, EETLKGEGTEPEPGAPEAEDDGR, GGVR…PAPF, and FREKKPKPSKKKAEGGSTEEGTG. Positions 413–422 are enriched in basic and acidic residues; it reads EAADKEEPPS. Ser757 and Ser767 each carry phosphoserine. Positions 759 to 776 are enriched in basic and acidic residues; the sequence is SKEEARRSSQPPADRDPA. A Nuclear localization signal motif is present at residues 894 to 909; the sequence is KKVPHNINFREKKPKP.

The protein belongs to the CPSF1 family. As to quaternary structure, component of the cleavage and polyadenylation specificity factor (CPSF) complex, composed of CPSF1, CPSF2, CPSF3, CPSF4 and FIP1L1. Found in a complex with CPSF1, FIP1L1 and PAPOLA. Interacts with FIP1L1, TENT2/GLD2 and SRRM1. Interacts with TUT1; the interaction is direct and mediates the recruitment of the CPSF complex on the 3'UTR of selected pre-mRNAs. Post-translationally, the N-terminus is blocked.

The protein resides in the nucleus. It localises to the nucleoplasm. Component of the cleavage and polyadenylation specificity factor (CPSF) complex that plays a key role in pre-mRNA 3'-end formation, recognizing the AAUAAA signal sequence and interacting with poly(A) polymerase and other factors to bring about cleavage and poly(A) addition. This subunit is involved in the RNA recognition step of the polyadenylation reaction. May play a role in eye morphogenesis and the development of retinal ganglion cell projections to the midbrain. In Bos taurus (Bovine), this protein is Cleavage and polyadenylation specificity factor subunit 1 (CPSF1).